The sequence spans 489 residues: DNA-directed RNA polymerase subunit beta' C-terminal section (489 aa).

The Mg(2+) site is built by Asp208, Asp210, and Asp212.

The protein belongs to the RNA polymerase beta' chain family. RpoC1 subfamily. As to quaternary structure, in plastids the minimal PEP RNA polymerase catalytic core is composed of four subunits: alpha, beta, beta', and beta''. When a (nuclear-encoded) sigma factor is associated with the core the holoenzyme is formed, which can initiate transcription. Mg(2+) serves as cofactor.

It localises to the plastid. It is found in the chloroplast. The catalysed reaction is RNA(n) + a ribonucleoside 5'-triphosphate = RNA(n+1) + diphosphate. In terms of biological role, DNA-dependent RNA polymerase catalyzes the transcription of DNA into RNA using the four ribonucleoside triphosphates as substrates. This chain is DNA-directed RNA polymerase subunit beta' C-terminal section (rpoC1B), found in Chlamydomonas reinhardtii (Chlamydomonas smithii).